Here is a 633-residue protein sequence, read N- to C-terminus: Chaperone protein HtpG (633 aa).

The segment at 1-344 is a; substrate-binding; the sequence is MSLQPQAETL…SNDLPLNISR (344 aa). The segment at 345-560 is b; that stretch reads ELLQSNEVIN…ENEMSGHLQR (216 aa). Positions 561–633 are c; the sequence is LLIQTGQDFM…KGLNELLLDS (73 aa).

The protein belongs to the heat shock protein 90 family. As to quaternary structure, homodimer.

Its subcellular location is the cytoplasm. In terms of biological role, molecular chaperone. Has ATPase activity. The chain is Chaperone protein HtpG from Coxiella burnetii (strain RSA 493 / Nine Mile phase I).